A 398-amino-acid chain; its full sequence is Cytochrome b (398 aa).

The next 4 helical transmembrane spans lie at 38–58, 82–104, 119–139, and 185–205; these read FGSLAGICLVIQIVTGVFLAM, WLLRYMHANGASMFFIVVYLHIF, VWCLGVVIFLLMIVTAFIGYV, and FFSLHYLLPFILVGASLLHLA. 2 residues coordinate heme b: histidine 88 and histidine 102. 2 residues coordinate heme b: histidine 189 and histidine 203. An a ubiquinone-binding site is contributed by histidine 208. The next 4 membrane-spanning stretches (helical) occupy residues 231–251, 295–315, 327–347, and 354–373; these read FYVKDLVGWVAFAIFFSIWIF, AGGVAAIALVFISLLALPFFK, IYQGIFWLLLADCLLLGWIGC, and FVTIGQISSVFFFLFFAITP.

Belongs to the cytochrome b family. The main subunits of complex b-c1 are: cytochrome b, cytochrome c1 and the Rieske protein. Requires heme b as cofactor.

It localises to the mitochondrion inner membrane. Functionally, component of the ubiquinol-cytochrome c reductase complex (complex III or cytochrome b-c1 complex) that is part of the mitochondrial respiratory chain. The b-c1 complex mediates electron transfer from ubiquinol to cytochrome c. Contributes to the generation of a proton gradient across the mitochondrial membrane that is then used for ATP synthesis. This is Cytochrome b (MT-CYB) from Triticum aestivum (Wheat).